A 357-amino-acid polypeptide reads, in one-letter code: Ribosomal RNA large subunit methyltransferase M (357 aa).

Residues serine 190, 223 to 226 (APGG), aspartate 242, aspartate 262, and aspartate 278 contribute to the S-adenosyl-L-methionine site. Lysine 307 serves as the catalytic Proton acceptor.

It belongs to the class I-like SAM-binding methyltransferase superfamily. RNA methyltransferase RlmE family. RlmM subfamily. Monomer.

It is found in the cytoplasm. The catalysed reaction is cytidine(2498) in 23S rRNA + S-adenosyl-L-methionine = 2'-O-methylcytidine(2498) in 23S rRNA + S-adenosyl-L-homocysteine + H(+). Functionally, catalyzes the 2'-O-methylation at nucleotide C2498 in 23S rRNA. The sequence is that of Ribosomal RNA large subunit methyltransferase M from Chromohalobacter salexigens (strain ATCC BAA-138 / DSM 3043 / CIP 106854 / NCIMB 13768 / 1H11).